The primary structure comprises 293 residues: Urease accessory protein UreD (293 aa).

The protein belongs to the UreD family. UreD, UreF and UreG form a complex that acts as a GTP-hydrolysis-dependent molecular chaperone, activating the urease apoprotein by helping to assemble the nickel containing metallocenter of UreC. The UreE protein probably delivers the nickel.

It localises to the cytoplasm. Required for maturation of urease via the functional incorporation of the urease nickel metallocenter. This Cupriavidus metallidurans (strain ATCC 43123 / DSM 2839 / NBRC 102507 / CH34) (Ralstonia metallidurans) protein is Urease accessory protein UreD.